Here is a 204-residue protein sequence, read N- to C-terminus: High frequency lysogenization protein HflD homolog (204 aa).

This sequence belongs to the HflD family.

The protein localises to the cytoplasm. Its subcellular location is the cell inner membrane. The sequence is that of High frequency lysogenization protein HflD homolog from Ruthia magnifica subsp. Calyptogena magnifica.